The following is a 483-amino-acid chain: Regulatory protein ViaA (483 aa).

This sequence belongs to the ViaA family. In terms of assembly, homodimer. Interacts with RavA.

The protein resides in the cytoplasm. Functionally, component of the RavA-ViaA chaperone complex, which may act on the membrane to optimize the function of some of the respiratory chains. ViaA stimulates the ATPase activity of RavA. The protein is Regulatory protein ViaA of Escherichia coli (strain 55989 / EAEC).